We begin with the raw amino-acid sequence, 296 residues long: MDRKATVIDGKLAAQHVKDSLRTRVAALEAIGQRPGLGTILVGDDAGSQSYVAGKHRDCAEVGIDSFRIDMSAEASQERVLDAVGRLNEDERCSGFIVQLPLPAHIDMHLVLNAIDPEKDADGLHPVNLGRLVLNQEGTLPCTPRGILELLRGNDVPITGSQFCVIGCGTTVGRPLGLMLTRPSEHATVTMVNEATIDVAAHTRVADVVIAAAGVANLVKPYWIKPGATVLSVGITRTVEGILGDVDPGVENVAGKWTRAAGGVGPMTRAMLLKNVVELAERAAGITSEASTKIAS.

NADP(+) contacts are provided by residues 167 to 169 (GCG) and Ile235.

It belongs to the tetrahydrofolate dehydrogenase/cyclohydrolase family. Homodimer.

It catalyses the reaction (6R)-5,10-methylene-5,6,7,8-tetrahydrofolate + NADP(+) = (6R)-5,10-methenyltetrahydrofolate + NADPH. It carries out the reaction (6R)-5,10-methenyltetrahydrofolate + H2O = (6R)-10-formyltetrahydrofolate + H(+). The protein operates within one-carbon metabolism; tetrahydrofolate interconversion. Functionally, catalyzes the oxidation of 5,10-methylenetetrahydrofolate to 5,10-methenyltetrahydrofolate and then the hydrolysis of 5,10-methenyltetrahydrofolate to 10-formyltetrahydrofolate. This is Bifunctional protein FolD 1 from Nocardioides sp. (strain ATCC BAA-499 / JS614).